Consider the following 98-residue polypeptide: MRTYEIMYVVRPNIEDEARKALVERFNGILTNDGAEIIEEKDWGKRRLAYEIEDFKEGYYYIVRINTENSEATDEFQRLAKINDDIIRYIVIREDEDK.

It belongs to the bacterial ribosomal protein bS6 family.

Binds together with bS18 to 16S ribosomal RNA. This chain is Small ribosomal subunit protein bS6, found in Staphylococcus carnosus (strain TM300).